Here is a 98-residue protein sequence, read N- to C-terminus: Ubiquitin-related modifier 1 (98 aa).

The residue at position 98 (Gly98) is a 1-thioglycine. A Glycyl lysine isopeptide (Gly-Lys) (interchain with K-? in acceptor proteins) cross-link involves residue Gly98.

This sequence belongs to the URM1 family. C-terminal thiocarboxylation occurs in 2 steps, it is first acyl-adenylated (-COAMP) via the hesA/moeB/thiF part of UBA4, then thiocarboxylated (-COSH) via the rhodanese domain of UBA4.

Its subcellular location is the cytoplasm. It participates in tRNA modification; 5-methoxycarbonylmethyl-2-thiouridine-tRNA biosynthesis. Functionally, acts as a sulfur carrier required for 2-thiolation of mcm(5)S(2)U at tRNA wobble positions of cytosolic tRNA(Lys), tRNA(Glu) and tRNA(Gln). Serves as sulfur donor in tRNA 2-thiolation reaction by being thiocarboxylated (-COSH) at its C-terminus by the MOCS3 homolog UBA4. The sulfur is then transferred to tRNA to form 2-thiolation of mcm(5)S(2)U. Prior mcm(5) tRNA modification by the elongator complex is required for 2-thiolation. Also acts as a ubiquitin-like protein (UBL) that is covalently conjugated via an isopeptide bond to lysine residues of target proteins such as AHP1. The thiocarboxylated form serves as substrate for conjugation and oxidative stress specifically induces the formation of UBL-protein conjugates. This Candida glabrata (strain ATCC 2001 / BCRC 20586 / JCM 3761 / NBRC 0622 / NRRL Y-65 / CBS 138) (Yeast) protein is Ubiquitin-related modifier 1.